Reading from the N-terminus, the 315-residue chain is Tetratricopeptide repeat protein 23-like (315 aa).

Residues 28 to 56 (KIPEHQRTDESSPTSGSEESEEDTKAKEK) are disordered. 3 coiled-coil regions span residues 65–90 (REKL…ANKE), 179–200 (REAY…ESYK), and 250–280 (SELV…HQAH).

The protein resides in the cytoplasm. The protein localises to the cytoskeleton. Its subcellular location is the microtubule organizing center. It localises to the centrosome. It is found in the spindle. The protein resides in the midbody. The polypeptide is Tetratricopeptide repeat protein 23-like (TTC23L) (Bos taurus (Bovine)).